The primary structure comprises 92 residues: Small ribosomal subunit protein bS20 (92 aa).

The interval 1–23 is disordered; that stretch reads MANTTSAKKATRKIARRTDVNKA.

The protein belongs to the bacterial ribosomal protein bS20 family.

In terms of biological role, binds directly to 16S ribosomal RNA. In Rhizobium etli (strain CIAT 652), this protein is Small ribosomal subunit protein bS20.